The following is a 272-amino-acid chain: Inositol monophosphatase (272 aa).

4 residues coordinate Mg(2+): Glu-71, Asp-90, Ile-92, and Asp-93. Position 71 (Glu-71) interacts with substrate. Residues 92 to 95, 194 to 196, Glu-213, and Asp-220 each bind substrate; these read IDGT and GTA. Asp-220 lines the Mg(2+) pocket.

It belongs to the inositol monophosphatase superfamily. Mg(2+) serves as cofactor.

It localises to the cytoplasm. It carries out the reaction a myo-inositol phosphate + H2O = myo-inositol + phosphate. The enzyme catalyses alpha-D-galactose 1-phosphate + H2O = D-galactose + phosphate. The protein operates within polyol metabolism; myo-inositol biosynthesis; myo-inositol from D-glucose 6-phosphate: step 2/2. Its activity is regulated as follows. Inhibited by Li(+), Ca(2+) and Mn(2+), but also by Mg(2+) at concentrations above 3 mM. Its function is as follows. Responsible for the provision of inositol required for synthesis of phosphatidylinositol and polyphosphoinositides. Has broad substrate specificity and can use myo-inositol monophosphates, myo-inositol 1,3-diphosphate, myo-inositol 1,4-diphosphate, scyllo-inositol-phosphate, D-galactose 1-phosphate, glucose-1-phosphate, glucose-6-phosphate, fructose-1-phosphate, beta-glycerophosphate, and 2'-AMP as substrates. The chain is Inositol monophosphatase (impa1) from Dictyostelium discoideum (Social amoeba).